The following is a 110-amino-acid chain: Nucleoid-associated protein bbp_426 (110 aa).

The protein belongs to the YbaB/EbfC family. In terms of assembly, homodimer.

The protein resides in the cytoplasm. Its subcellular location is the nucleoid. Its function is as follows. Binds to DNA and alters its conformation. May be involved in regulation of gene expression, nucleoid organization and DNA protection. This Buchnera aphidicola subsp. Baizongia pistaciae (strain Bp) protein is Nucleoid-associated protein bbp_426.